The primary structure comprises 248 residues: Flavodoxin/ferredoxin--NADP reductase (248 aa).

The 100-residue stretch at 2 to 101 (ADWVTGKVTK…SEAAGFFVLD (100 aa)) folds into the FAD-binding FR-type domain. D17 contacts NADP(+). FAD-binding positions include 50–53 (RAYS), Y66, 74–76 (KLS), and T116. NADP(+)-binding positions include 143-144 (AR), 173-174 (SR), R184, 214-216 (NPQ), and D220. 247 to 248 (YW) is a binding site for FAD.

The protein belongs to the ferredoxin--NADP reductase type 1 family. Monomer. FAD serves as cofactor.

It is found in the cytoplasm. It catalyses the reaction 2 reduced [2Fe-2S]-[ferredoxin] + NADP(+) + H(+) = 2 oxidized [2Fe-2S]-[ferredoxin] + NADPH. It carries out the reaction reduced [flavodoxin] + NADP(+) = oxidized [flavodoxin] + NADPH + 2 H(+). Functionally, transports electrons between flavodoxin or ferredoxin and NADPH. Reduces flavodoxin 1, flavodoxin 2 and ferredoxin, ferredoxin being the kinetically and thermodynamically preferred partner. Required for the activation of several enzymes such as pyruvate formate-lyase, anaerobic ribonucleotide reductase and cobalamin-dependent methionine synthase. The protein is Flavodoxin/ferredoxin--NADP reductase of Escherichia coli (strain K12).